A 39-amino-acid polypeptide reads, in one-letter code: Photosystem II reaction center protein Y (39 aa).

A helical transmembrane segment spans residues 5-23; it reads VLIVLTPLLIAGGWAVFNI.

The protein belongs to the PsbY family. In terms of assembly, PSII is composed of 1 copy each of membrane proteins PsbA, PsbB, PsbC, PsbD, PsbE, PsbF, PsbH, PsbI, PsbJ, PsbK, PsbL, PsbM, PsbT, PsbX, PsbY, PsbZ, Psb30/Ycf12, peripheral proteins PsbO, CyanoQ (PsbQ), PsbU, PsbV and a large number of cofactors. It forms dimeric complexes.

It is found in the cellular thylakoid membrane. Its function is as follows. Loosely associated component of the core of photosystem II (PSII), it is not always seen in crystals. PSII is a light-driven water plastoquinone oxidoreductase, using light energy to abstract electrons from H(2)O, generating a proton gradient subsequently used for ATP formation. The chain is Photosystem II reaction center protein Y from Microcystis aeruginosa (strain NIES-843 / IAM M-2473).